A 483-amino-acid polypeptide reads, in one-letter code: Acyl-coenzyme A thioesterase 2, mitochondrial (483 aa).

N6-acetyllysine is present on K104. Catalysis depends on charge relay system residues S294, D388, and H422. K470 carries the N6-succinyllysine modification. The Microbody targeting signal motif lies at 481–483; that stretch reads SKV.

Belongs to the C/M/P thioester hydrolase family. Monomer. In terms of tissue distribution, strongest expression in heart, liver, muscle and kidney. Weak in placenta and pancreas.

The protein resides in the mitochondrion. It carries out the reaction hexadecanoyl-CoA + H2O = hexadecanoate + CoA + H(+). It catalyses the reaction tetradecanoyl-CoA + H2O = tetradecanoate + CoA + H(+). The catalysed reaction is octadecanoyl-CoA + H2O = octadecanoate + CoA + H(+). The enzyme catalyses eicosanoyl-CoA + H2O = eicosanoate + CoA + H(+). It carries out the reaction decanoyl-CoA + H2O = decanoate + CoA + H(+). It catalyses the reaction dodecanoyl-CoA + H2O = dodecanoate + CoA + H(+). The catalysed reaction is (9Z)-octadecenoyl-CoA + H2O = (9Z)-octadecenoate + CoA + H(+). The enzyme catalyses (9Z)-hexadecenoyl-CoA + H2O = (9Z)-hexadecenoate + CoA + H(+). It carries out the reaction (9E)-octadecenoyl-CoA + H2O = (9E)-octadecenoate + CoA + H(+). It catalyses the reaction (9Z,12Z)-octadecadienoyl-CoA + H2O = (9Z,12Z)-octadecadienoate + CoA + H(+). It functions in the pathway lipid metabolism; fatty acid metabolism. In terms of biological role, catalyzes the hydrolysis of acyl-CoAs into free fatty acids and coenzyme A (CoASH), regulating their respective intracellular levels. Displays higher activity toward long chain acyl CoAs (C14-C20). The enzyme is involved in enhancing the hepatic fatty acid oxidation in mitochondria. The chain is Acyl-coenzyme A thioesterase 2, mitochondrial (ACOT2) from Homo sapiens (Human).